The sequence spans 687 residues: Protein FAR1-RELATED SEQUENCE 1 (687 aa).

The region spanning 35 to 137 (EFYKEYANSV…VKEHNHEIFT (103 aa)) is the FAR1 domain. The MULE domain occupies 211 to 254 (KAMHGCRPRVILTKHDQMLKEAVLEVFPSSRHCFYMWDTLGQMP). The segment at 440–476 (FVVVWNSESSEVVCSCRLFELKGFLCRHAMIVLQMSG) adopts an SWIM-type zinc-finger fold. Residues 540–562 (NVLNEALRKWENKSNLIQNLEES) are a coiled coil.

This sequence belongs to the FHY3/FAR1 family. In terms of tissue distribution, expressed in rosette and cauline leaves, inflorescences stems, flowers and siliques.

The protein localises to the nucleus. Putative transcription activator involved in regulating light control of development. In Arabidopsis thaliana (Mouse-ear cress), this protein is Protein FAR1-RELATED SEQUENCE 1 (FRS1).